We begin with the raw amino-acid sequence, 539 residues long: O-phosphoserine--tRNA(Cys) ligase (539 aa).

Substrate is bound by residues 188-190, 233-235, 275-276, and Asn-327; these read HMT, SAS, and YY.

It belongs to the class-II aminoacyl-tRNA synthetase family. O-phosphoseryl-tRNA(Cys) synthetase subfamily. In terms of assembly, homotetramer. Interacts with SepCysS.

The catalysed reaction is tRNA(Cys) + O-phospho-L-serine + ATP = O-phospho-L-seryl-tRNA(Cys) + AMP + diphosphate. In terms of biological role, catalyzes the attachment of O-phosphoserine (Sep) to tRNA(Cys). This chain is O-phosphoserine--tRNA(Cys) ligase, found in Methanosarcina barkeri (strain Fusaro / DSM 804).